The following is a 429-amino-acid chain: Dihydroorotase (429 aa).

Zn(2+) is bound by residues H59 and H61. Residues H61–R63 and N93 contribute to the substrate site. Positions 143, 171, 229, and 298 each coordinate Zn(2+). Position 143 is an N6-carboxylysine (K143). Residue D298 is part of the active site. Substrate-binding positions include H302 and A316 to G317.

Belongs to the metallo-dependent hydrolases superfamily. DHOase family. Class I DHOase subfamily. It depends on Zn(2+) as a cofactor.

The enzyme catalyses (S)-dihydroorotate + H2O = N-carbamoyl-L-aspartate + H(+). Its pathway is pyrimidine metabolism; UMP biosynthesis via de novo pathway; (S)-dihydroorotate from bicarbonate: step 3/3. Its function is as follows. Catalyzes the reversible cyclization of carbamoyl aspartate to dihydroorotate. The chain is Dihydroorotase from Methanosphaera stadtmanae (strain ATCC 43021 / DSM 3091 / JCM 11832 / MCB-3).